Reading from the N-terminus, the 417-residue chain is Probable dihydrofolate synthetase (417 aa).

Residue 34–37 (GKGS) participates in ATP binding. Mg(2+) contacts are provided by Ser58, Glu123, and His151. 2 residues coordinate ATP: Arg274 and Asp289.

This sequence belongs to the folylpolyglutamate synthase family.

It carries out the reaction 7,8-dihydropteroate + L-glutamate + ATP = 7,8-dihydrofolate + ADP + phosphate + H(+). It functions in the pathway cofactor biosynthesis; tetrahydrofolylpolyglutamate biosynthesis. Glutamate-adding enzyme which catalyzes the binding of the first glutamyl side chain to dihydropteroate. Leads to the de nove synthesis of tetrahydrofolate. de novo. In Schizosaccharomyces pombe (strain 972 / ATCC 24843) (Fission yeast), this protein is Probable dihydrofolate synthetase (fol3).